The following is a 408-amino-acid chain: Peptidase T (408 aa).

His78 lines the Zn(2+) pocket. Residue Asp80 is part of the active site. Asp141 is a binding site for Zn(2+). Glu175 functions as the Proton acceptor in the catalytic mechanism. Zn(2+)-binding residues include Glu176, Asp198, and His380.

The protein belongs to the peptidase M20B family. The cofactor is Zn(2+).

Its subcellular location is the cytoplasm. It catalyses the reaction Release of the N-terminal residue from a tripeptide.. In terms of biological role, cleaves the N-terminal amino acid of tripeptides. The protein is Peptidase T of Clostridium botulinum (strain Langeland / NCTC 10281 / Type F).